The sequence spans 354 residues: Uroporphyrinogen decarboxylase (354 aa).

Substrate is bound by residues Arg30–Arg34, Asp79, Tyr154, Ser209, and His333.

It belongs to the uroporphyrinogen decarboxylase family. Homodimer.

The protein resides in the cytoplasm. The enzyme catalyses uroporphyrinogen III + 4 H(+) = coproporphyrinogen III + 4 CO2. It functions in the pathway porphyrin-containing compound metabolism; protoporphyrin-IX biosynthesis; coproporphyrinogen-III from 5-aminolevulinate: step 4/4. Its function is as follows. Catalyzes the decarboxylation of four acetate groups of uroporphyrinogen-III to yield coproporphyrinogen-III. The protein is Uroporphyrinogen decarboxylase of Mycolicibacterium gilvum (strain PYR-GCK) (Mycobacterium gilvum (strain PYR-GCK)).